A 213-amino-acid chain; its full sequence is MAKNYYDITLALAGVCQAARLVQQLAHQGHCDSDALHVSLNSIIDLDPESTLAVFGGSEANLRLGLETLLGVLNTSSRQGLNAELTRYTLSLMVLERKLAASKGAMDTLGNRIAGLHRQLEHFDLQSETLLSAMAGIYVDVISPLGPRIQVTGSPAVLQSPQVQAKVRSALLAGIRAAVLWHQVGGGRLQLMFSRNRLVNQAKQILAHLTPEL.

Belongs to the HflD family.

The protein resides in the cytoplasm. The protein localises to the cell inner membrane. The polypeptide is High frequency lysogenization protein HflD homolog (Klebsiella pneumoniae (strain 342)).